The following is a 333-amino-acid chain: NADH dehydrogenase (ubiquinone) complex I, assembly factor 6 (333 aa).

Residues 1–44 (MAASTLGSAWGPLRLGVPGLCRRRPPRGLWARARRLSEPVASGR) constitute a mitochondrion transit peptide.

It belongs to the NDUFAF6 family.

It is found in the mitochondrion inner membrane. In terms of biological role, involved in the assembly of mitochondrial NADH:ubiquinone oxidoreductase complex (complex I) at early stages. May play a role in the biogenesis of complex I subunit MT-ND1. The polypeptide is NADH dehydrogenase (ubiquinone) complex I, assembly factor 6 (NDUFAF6) (Bos taurus (Bovine)).